Consider the following 503-residue polypeptide: Probable cytosol aminopeptidase (503 aa).

The Mn(2+) site is built by lysine 270 and aspartate 275. Lysine 282 is an active-site residue. 3 residues coordinate Mn(2+): aspartate 293, aspartate 352, and glutamate 354. The active site involves arginine 356.

Belongs to the peptidase M17 family. It depends on Mn(2+) as a cofactor.

The protein resides in the cytoplasm. It catalyses the reaction Release of an N-terminal amino acid, Xaa-|-Yaa-, in which Xaa is preferably Leu, but may be other amino acids including Pro although not Arg or Lys, and Yaa may be Pro. Amino acid amides and methyl esters are also readily hydrolyzed, but rates on arylamides are exceedingly low.. It carries out the reaction Release of an N-terminal amino acid, preferentially leucine, but not glutamic or aspartic acids.. In terms of biological role, presumably involved in the processing and regular turnover of intracellular proteins. Catalyzes the removal of unsubstituted N-terminal amino acids from various peptides. The chain is Probable cytosol aminopeptidase from Escherichia fergusonii (strain ATCC 35469 / DSM 13698 / CCUG 18766 / IAM 14443 / JCM 21226 / LMG 7866 / NBRC 102419 / NCTC 12128 / CDC 0568-73).